Reading from the N-terminus, the 637-residue chain is Biosynthetic arginine decarboxylase (637 aa).

K110 carries the N6-(pyridoxal phosphate)lysine modification. 290–300 lines the substrate pocket; that stretch reads IDVGGGLGVDY.

The protein belongs to the Orn/Lys/Arg decarboxylase class-II family. SpeA subfamily. Mg(2+) serves as cofactor. It depends on pyridoxal 5'-phosphate as a cofactor.

The enzyme catalyses L-arginine + H(+) = agmatine + CO2. Catalyzes the biosynthesis of agmatine from arginine. The sequence is that of Biosynthetic arginine decarboxylase from Pseudomonas putida (strain ATCC 47054 / DSM 6125 / CFBP 8728 / NCIMB 11950 / KT2440).